The sequence spans 113 residues: Subtilisin inhibitor-like protein 2 (113 aa).

2 disulfides stabilise this stretch: cysteine 35–cysteine 50 and cysteine 71–cysteine 101.

This sequence belongs to the protease inhibitor I16 (SSI) family. Homodimer.

It is found in the secreted. Its function is as follows. Inhibitor of subtilisin BPN' and trypsin. The sequence is that of Subtilisin inhibitor-like protein 2 from Streptomyces rochei (Streptomyces parvullus).